A 710-amino-acid chain; its full sequence is MDNWNSVRNVSSDRQTSKTSENPPHTSNEYSGKPEFINLSPDLEENLDEKLMSAFPGLEPHVFQHSQSPLSHKDASLLATMPSVASSNPSLISSGSSQTGSPSQSLSSNKEPSSPGISPSNDSQSQNTNHTSISANPYVNNPSHTSRNPDSGSSLNTASHEVPSSKSDVNVQMLARLKSKSRQKISSSDPLEDLRLTLTECLNPINIVQAPKECAAILVNLMSNITQDDQKLVFLDLLKSKVGNSIYSQLVDGGRKLFLPKLRNWFVSAIRSKHDELIHLILLVLANLPLTTEKLAEVKFGKPILIVKKKSTNSVIRQLAENLSELAEKSFTIEQNRENEKSSTKNDSTVSSSAVVMAPAGPAMAPSASNKPSASSTTKSSNSKSKKKVTSISGTSFFKNLASSTKPTSASSSTKAPLTKQQTNPSTPLSSIMAGLKGREKEKDKDSGISSENVSNNREELPSFRKRSSSSRQSEEIASLQAENAVFSSDPASNDEKTGNKKRKKKSVSWKPDNDLVQVKFIESLNEEGAASVKTPHIYGNARDMDRQEARVAFGSHVEDDVENEIIWYKPVPIKFEISKDEIHPRGYKCGGNERNLTPEATSEIEREKNESKDISTFNIILDLPVIREFDDSRPPAHIKLVSSDTQATTELGFNGLVQQVSENNTNAYSATSNSQLSSIFSNLSSSISDASSNVLQNPSLSIPNYSNAI.

Residues 1 to 30 show a composition bias toward polar residues; sequence MDNWNSVRNVSSDRQTSKTSENPPHTSNEY. 3 disordered regions span residues 1–42, 85–170, and 361–510; these read MDNW…LSPD, ASSN…SDVN, and GPAM…SVSW. Over residues 86-108 the composition is skewed to low complexity; the sequence is SSNPSLISSGSSQTGSPSQSLSS. A compositionally biased stretch (polar residues) spans 109–170; that stretch reads NKEPSSPGIS…EVPSSKSDVN (62 aa). 2 stretches are compositionally biased toward low complexity: residues 361 to 383 and 401 to 420; these read GPAMAPSASNKPSASSTTKSSNS and LASSTKPTSASSSTKAPLTK. Polar residues predominate over residues 421–430; sequence QQTNPSTPLS. Residues 437–447 are compositionally biased toward basic and acidic residues; that stretch reads KGREKEKDKDS.

As to quaternary structure, component of the cleavage and polyadenylation factor (CPF) complex.

The protein resides in the cytoplasm. It is found in the nucleus. Its function is as follows. RNA-binding component of the cleavage and polyadenylation factor (CPF) complex, which plays a key role in polyadenylation-dependent pre-mRNA 3'-end formation. Involved in poly(A) site recognition. May be involved in coupling transcription termination and mRNA 3'-end formation. The polypeptide is Cleavage and polyadenylation factor complex subunit C74.02c (Schizosaccharomyces pombe (strain 972 / ATCC 24843) (Fission yeast)).